A 549-amino-acid chain; its full sequence is Probable amidase (549 aa).

Catalysis depends on charge relay system residues K132 and S209. The active-site Acyl-ester intermediate is S233.

Belongs to the amidase family.

It carries out the reaction a monocarboxylic acid amide + H2O = a monocarboxylate + NH4(+). The sequence is that of Probable amidase (AMD2) from Saccharomyces cerevisiae (strain ATCC 204508 / S288c) (Baker's yeast).